Here is a 266-residue protein sequence, read N- to C-terminus: Glucosamine-6-phosphate deaminase (266 aa).

The active-site Proton acceptor; for enolization step is Asp-72. The active-site For ring-opening step is the Asp-141. Catalysis depends on His-143, which acts as the Proton acceptor; for ring-opening step. Glu-148 serves as the catalytic For ring-opening step.

This sequence belongs to the glucosamine/galactosamine-6-phosphate isomerase family. NagB subfamily. As to quaternary structure, homohexamer.

It catalyses the reaction alpha-D-glucosamine 6-phosphate + H2O = beta-D-fructose 6-phosphate + NH4(+). It functions in the pathway amino-sugar metabolism; N-acetylneuraminate degradation; D-fructose 6-phosphate from N-acetylneuraminate: step 5/5. Its activity is regulated as follows. Allosterically activated by N-acetylglucosamine 6-phosphate (GlcNAc6P). Its function is as follows. Catalyzes the reversible isomerization-deamination of glucosamine 6-phosphate (GlcN6P) to form fructose 6-phosphate (Fru6P) and ammonium ion. The polypeptide is Glucosamine-6-phosphate deaminase (Yersinia enterocolitica serotype O:8 / biotype 1B (strain NCTC 13174 / 8081)).